An 840-amino-acid chain; its full sequence is N-acetyltransferase ESCO1 (840 aa).

The segment covering 1-25 has biased composition (basic and acidic residues); it reads MMSIQEKSKENSSKVTKKSDDKNSE. The disordered stretch occupies residues 1 to 188; that stretch reads MMSIQEKSKE…VLEVKSDSKE (188 aa). Composition is skewed to polar residues over residues 46–58, 65–74, and 81–96; these read KSQAKSSSESKIN, RMSTRSSKAA, and KSINKNTVTVRGYSQE. Residues 131-140 show a composition bias toward basic and acidic residues; sequence VSRRSLRSRE. A compositionally biased stretch (polar residues) spans 141 to 153; it reads IQGQVQAVKQSLP. A compositionally biased stretch (low complexity) spans 161 to 170; it reads SSTQSKSNKT. Residues 178–188 show a composition bias toward basic and acidic residues; it reads KVLEVKSDSKE. Ser200 is modified (phosphoserine). 2 disordered regions span residues 221-300 and 318-338; these read TQGS…KSKR and NVEVKKESSQMESVKEEKPTE. Positions 267–278 are enriched in polar residues; it reads HTQVNTNTTLPK. The span at 319 to 338 shows a compositional bias: basic and acidic residues; that stretch reads VEVKKESSQMESVKEEKPTE. Lys332 participates in a covalent cross-link: Glycyl lysine isopeptide (Lys-Gly) (interchain with G-Cter in SUMO2). Ser412 bears the Phosphoserine mark. Disordered stretches follow at residues 486–505 and 542–582; these read ANEIKPSDPPLDNQMKHSFD and TGEN…KCNS. Positions 551–565 are enriched in polar residues; the sequence is APQQHSILSNQTSKS. Residues 617–641 form a CCHH-type zinc finger; it reads VSCNVCGMLYTASNPEDETQHLLFH. Residues 772-774, 780-785, and 812-814 contribute to the acetyl-CoA site; these read IWV, RKKIAS, and TPD.

It belongs to the acetyltransferase family. ECO subfamily. As to quaternary structure, the subunit structure is controversial. Monomer. Homodimer. Phosphorylated during mitosis, when associated with chromosomes. In terms of tissue distribution, widely expressed. Expressed in heart, brain, liver, placenta, lung, kidney and pancreas. Highly expressed in muscle.

It localises to the nucleus. The protein localises to the chromosome. The catalysed reaction is L-lysyl-[protein] + acetyl-CoA = N(6)-acetyl-L-lysyl-[protein] + CoA + H(+). Acetyltransferase required for the establishment of sister chromatid cohesion. Couples the processes of cohesion and DNA replication to ensure that only sister chromatids become paired together. In contrast to the structural cohesins, the deposition and establishment factors are required only during S phase. Acts by mediating the acetylation of cohesin component SMC3. The chain is N-acetyltransferase ESCO1 (ESCO1) from Homo sapiens (Human).